The sequence spans 473 residues: FAD-dependent oxidoreductase dpasF (473 aa).

An N-terminal signal peptide occupies residues 1–21 (MNRLLASALLVGSAVVAPVSA). N-linked (GlcNAc...) asparagine glycosylation is found at N26, N54, N92, N133, N185, N276, and N401.

It belongs to the beta-cyclopiazonate dehydrogenase family. FAD serves as cofactor.

The protein operates within secondary metabolite biosynthesis; terpenoid biosynthesis. Its function is as follows. FAD-dependent oxidoreductase; part of the gene cluster that mediates the biosynthesis of the diterpenoid pyrones subglutinols A and B. The first step of the pathway is the synthesis of the alpha-pyrone moiety by the polyketide synthase dpasA via condensation of one acetyl-CoA starter unit with 3 malonyl-CoA units and 2 methylations. The alpha-pyrone is then combined with geranylgeranyl pyrophosphate (GGPP) formed by the GGPP synthase dpasD through the action of the prenyltransferase dpasC to yield a linear alpha-pyrone diterpenoid. Subsequent steps in the diterpenoid pyrone biosynthetic pathway involve the decalin core formation, which is initiated by the epoxidation of the C10-C11 olefin by the FAD-dependent oxidoreductase dpasE, and is followed by a cyclization cascade catalyzed by the terpene cyclase dpasB. The FAD-linked oxidoreductase dpasF is then involved in tetrahydrofuran (THF) ring formation at the C5 unit to complete the formation of subglutinols A and B. DpasF possesses also an additional catalytic ability of multi-step oxidations to generate a new DDP analog with an enone system at the C5 named FDDP A. This is FAD-dependent oxidoreductase dpasF from Apiospora sacchari (Arthrinium sacchari).